The following is a 383-amino-acid chain: MLASYASDPLKSRGRLYREIPTSYRNEFERDRDRIIHTNAFRRLQYKTQVFINHEGDHYRNRLTHSLEVSTVARSIANTLNLSSDLAETIALAHDLGHTPFGHAGERSLNECMKEHNGFSHNAQSLKILTLLEKRYAAYRGVNLTWEVLEGIVKHNGPISGEVNEYIEEYNSQNDLELNTYASAEAQIAALADDISYISHDLEDSIGAKIIDFNNLAELKYIDQHVFELKSKYKNISSSCLIYEVVRKLMHELITDLLWQTKTNINKEKITHIDEIRNLNYQIVDFTEKTNERIKEIKKFLHERVYKSNRITAISLKCTKIVQGLFKVYMEDVNLLPVNWKIQIDSNNPNSKARIIADYIAGMTDRFAIQEYNQLCSLNFNNI.

Residues 62–198 enclose the HD domain; it reads RLTHSLEVST…AALADDISYI (137 aa).

It belongs to the dGTPase family. Type 2 subfamily.

This chain is Deoxyguanosinetriphosphate triphosphohydrolase-like protein, found in Rickettsia bellii (strain RML369-C).